The sequence spans 123 residues: Basic myotoxic phospholipase A2 PhTX-II (123 aa).

Intrachain disulfides connect Cys-26/Cys-116, Cys-28/Cys-45, Cys-44/Cys-95, Cys-50/Cys-123, Cys-51/Cys-88, Cys-58/Cys-81, and Cys-75/Cys-86. Positions 27, 29, and 31 each coordinate Ca(2+). The active site involves His-48. Asp-49 is a binding site for Ca(2+). Residue Asp-89 is part of the active site.

In terms of assembly, monomer. The cofactor is Ca(2+). As to expression, expressed by the venom gland.

It is found in the secreted. It catalyses the reaction a 1,2-diacyl-sn-glycero-3-phosphocholine + H2O = a 1-acyl-sn-glycero-3-phosphocholine + a fatty acid + H(+). With respect to regulation, P-bromophenacyl bromide (BPB) completely inhibits the catalytic and edematogenic activities. Enzymatic activity is also diminished by EDTA, heparin and crotapotins F2 and F3 from C.d.collilineatus. Inhibited by divalent cations different from calcium ions (cadmium, magnesium, manganese, zinc), since they act as competitive antagonists of this cofactor. Functionally, snake venom phospholipase A2 (PLA2) that induces myotoxicity and local edema in mice. In addition, it causes neuromuscular blockade in avian neuromuscular preparations with a significant direct action on skeletal muscle function. Myotoxic action is exerted by both enzymatic and non-enzymatic mechanisms. PLA2 catalyzes the calcium-dependent hydrolysis of the 2-acyl groups in 3-sn-phosphoglycerides. In Bothrocophias hyoprora (Amazonian hognose viper), this protein is Basic myotoxic phospholipase A2 PhTX-II.